The primary structure comprises 326 residues: uncharacterized protein (326 aa).

Solcar repeat units follow at residues 15 to 106, 114 to 215, and 234 to 322; these read EFLV…VRRV, ETHA…ATDF, and LKTW…SKAL. 6 helical membrane passes run 16–36, 83–103, 120–140, 191–211, 240–260, and 294–314; these read FLVKSGIAGGTAGCVAKSVVA, TATLYRVFPYAGIKFVAYEQV, FLSGSLAGTCSVFFTYPLELI, FSVTLTGIFPYAGMSFLAYDL, LLCGAFAGVCGQTVSYPFEVC, and FFVGLTIGYIKVIPMVSTSFF.

It belongs to the mitochondrial carrier (TC 2.A.29) family.

The protein localises to the mitochondrion inner membrane. This is an uncharacterized protein from Schizosaccharomyces pombe (strain 972 / ATCC 24843) (Fission yeast).